Reading from the N-terminus, the 593-residue chain is Uncoordinated protein 58 (593 aa).

A run of 6 helical transmembrane segments spans residues 186–206 (VILV…LMLL), 291–311 (TFPT…YGEV), 320–340 (VFSV…AADI), 402–422 (PIGA…AMFI), 430–450 (FIHA…GDIV), and 455–475 (IFLS…TMCV).

It belongs to the two pore domain potassium channel (TC 1.A.1.8) family.

It localises to the membrane. In terms of biological role, has a role in mobility, possibly in the transport of potassium in muscles. This Caenorhabditis briggsae protein is Uncoordinated protein 58.